The primary structure comprises 116 residues: Small ribosomal subunit protein uS13 (116 aa).

Residues R92–R116 are disordered. Residues A106–R116 show a composition bias toward basic residues.

It belongs to the universal ribosomal protein uS13 family. In terms of assembly, part of the 30S ribosomal subunit. Forms a loose heterodimer with protein S19. Forms two bridges to the 50S subunit in the 70S ribosome.

Its function is as follows. Located at the top of the head of the 30S subunit, it contacts several helices of the 16S rRNA. In the 70S ribosome it contacts the 23S rRNA (bridge B1a) and protein L5 of the 50S subunit (bridge B1b), connecting the 2 subunits; these bridges are implicated in subunit movement. Contacts the tRNAs in the A and P-sites. The chain is Small ribosomal subunit protein uS13 from Lactobacillus delbrueckii subsp. bulgaricus (strain ATCC 11842 / DSM 20081 / BCRC 10696 / JCM 1002 / NBRC 13953 / NCIMB 11778 / NCTC 12712 / WDCM 00102 / Lb 14).